Here is a 446-residue protein sequence, read N- to C-terminus: tRNA modification GTPase MnmE (446 aa).

Positions 21, 77, and 116 each coordinate (6S)-5-formyl-5,6,7,8-tetrahydrofolate. The 159-residue stretch at 212–370 (GFRIALIGAP…LRAALASHVA (159 aa)) folds into the TrmE-type G domain. N222 is a K(+) binding site. GTP contacts are provided by residues 222–227 (NAGKST), 241–247 (TDVAGTT), and 266–269 (DTAG). S226 provides a ligand contact to Mg(2+). Positions 241, 243, and 246 each coordinate K(+). T247 lines the Mg(2+) pocket. K446 contacts (6S)-5-formyl-5,6,7,8-tetrahydrofolate.

This sequence belongs to the TRAFAC class TrmE-Era-EngA-EngB-Septin-like GTPase superfamily. TrmE GTPase family. In terms of assembly, homodimer. Heterotetramer of two MnmE and two MnmG subunits. It depends on K(+) as a cofactor.

It localises to the cytoplasm. In terms of biological role, exhibits a very high intrinsic GTPase hydrolysis rate. Involved in the addition of a carboxymethylaminomethyl (cmnm) group at the wobble position (U34) of certain tRNAs, forming tRNA-cmnm(5)s(2)U34. In Caulobacter vibrioides (strain ATCC 19089 / CIP 103742 / CB 15) (Caulobacter crescentus), this protein is tRNA modification GTPase MnmE.